Reading from the N-terminus, the 207-residue chain is NADH-quinone oxidoreductase subunit C (207 aa).

Belongs to the complex I 30 kDa subunit family. In terms of assembly, NDH-1 is composed of 14 different subunits. Subunits NuoB, C, D, E, F, and G constitute the peripheral sector of the complex.

The protein resides in the cell inner membrane. The catalysed reaction is a quinone + NADH + 5 H(+)(in) = a quinol + NAD(+) + 4 H(+)(out). Functionally, NDH-1 shuttles electrons from NADH, via FMN and iron-sulfur (Fe-S) centers, to quinones in the respiratory chain. The immediate electron acceptor for the enzyme in this species is believed to be ubiquinone. Couples the redox reaction to proton translocation (for every two electrons transferred, four hydrogen ions are translocated across the cytoplasmic membrane), and thus conserves the redox energy in a proton gradient. The polypeptide is NADH-quinone oxidoreductase subunit C (Thermus thermophilus (strain ATCC BAA-163 / DSM 7039 / HB27)).